Consider the following 311-residue polypeptide: Porphobilinogen deaminase (311 aa).

C241 carries the S-(dipyrrolylmethanemethyl)cysteine modification.

The protein belongs to the HMBS family. In terms of assembly, monomer. It depends on dipyrromethane as a cofactor.

The enzyme catalyses 4 porphobilinogen + H2O = hydroxymethylbilane + 4 NH4(+). The protein operates within porphyrin-containing compound metabolism; protoporphyrin-IX biosynthesis; coproporphyrinogen-III from 5-aminolevulinate: step 2/4. Functionally, tetrapolymerization of the monopyrrole PBG into the hydroxymethylbilane pre-uroporphyrinogen in several discrete steps. The chain is Porphobilinogen deaminase from Shouchella clausii (strain KSM-K16) (Alkalihalobacillus clausii).